Consider the following 240-residue polypeptide: C-type lectin domain family 4 member A (240 aa).

The Cytoplasmic segment spans residues 1–48 (MASEITYAEVRIKNESNSSVTYSGSPAAPREKPTRHLSKPGSLLVPFT). The short motif at 5-10 (ITYAEV) is the ITIM motif element. The disordered stretch occupies residues 18 to 38 (SSVTYSGSPAAPREKPTRHLS). Residues 49–69 (SLMVLLLLLAITFLVAFIIYF) form a helical; Signal-anchor for type II membrane protein membrane-spanning segment. At 70–240 (QKYSQFLEEK…SVCQMKKIQL (171 aa)) the chain is on the extracellular side. Intrachain disulfides connect Cys107–Cys118, Cys140–Cys233, and Cys208–Cys225. A C-type lectin domain is found at 129 to 235 (SKASWSESEK…SGKQQSVCQM (107 aa)). Ca(2+) contacts are provided by Val149 and Glu155. An N-linked (GlcNAc...) asparagine glycan is attached at Asn190. Residues Glu200, Ser202, and Glu206 each coordinate Ca(2+). Alpha-D-mannopyranose-binding positions include 200 to 202 (EPS) and Glu206. An N-acetyl-D-glucosamine-binding site is contributed by 211–213 (INH). Ca(2+)-binding residues include Asn221 and Asp222.

As to quaternary structure, may interact with PTPN6 via its ITIM site. As to expression, expressed by myeloid cells (dendritic cells, macrophages, and neutrophils) and B-cells.

The protein localises to the cell membrane. In terms of biological role, C-type lectin receptor that binds carbohydrates mannose and fucose but also weakly interacts with N-acetylglucosamine (GlcNAc) in a Ca(2+)-dependent manner. Involved in regulating immune reactivity. Once triggered by antigen, it is internalized by clathrin-dependent endocytosis and delivers its antigenic cargo into the antigen presentation pathway resulting in cross-priming of CD8(+) T cells. This cross-presentation and cross-priming are enhanced by TLR7 and TLR8 agonists with increased expansion of the CD8(+) T cells, high production of IFNG and TNF with reduced levels of IL4, IL5 and IL13. In plasmacytoid dendritic cells, inhibits TLR9-mediated IFNA and TNF production. May be involved via its ITIM motif (immunoreceptor tyrosine-based inhibitory motifs) in the inhibition of B-cell-receptor-mediated calcium mobilization and protein tyrosine phosphorylation. The chain is C-type lectin domain family 4 member A (Clec4a) from Rattus norvegicus (Rat).